A 399-amino-acid polypeptide reads, in one-letter code: Sister chromatid cohesion protein DCC1 (399 aa).

The protein belongs to the DCC1 family. Component of the CTF18-RFC complex which consists of CTF8, CTF18, DSCC1 and the RFC complex. Interacts with CTF8 and CTF18. Interacts with DDX11.

It localises to the nucleus. Loads PCNA onto primed templates regulating velocity, spacing and restart activity of replication forks. May couple DNA replication to sister chromatid cohesion through regulation of the acetylation of the cohesin subunit SMC3. This is Sister chromatid cohesion protein DCC1 (DSCC1) from Mus musculus (Mouse).